The chain runs to 349 residues: Single-stranded TG1-3 DNA-binding protein (349 aa).

Residues 45 to 127 (FRVFVGRLST…REIVVQKARP (83 aa)) enclose the RRM 1 domain. 2 disordered regions span residues 121-208 (VVQK…PNSI) and 298-349 (EDKQ…AITA). S152 is modified (phosphoserine). Residues 168-179 (ANTATAPSSNEA) show a composition bias toward polar residues. The span at 181 to 191 (GVDKKQNEIKG) shows a compositional bias: basic and acidic residues. Residues 206-296 (NSIYVSGLSV…LTLVVKSAVF (91 aa)) form the RRM 2 domain. Basic and acidic residues-rich tracts occupy residues 298 to 310 (EDKQNDENEKNEN) and 327 to 340 (TEPKASEVDSEEKS).

It localises to the cytoplasm. The protein localises to the nucleus. Its subcellular location is the chromosome. It is found in the telomere. Binds single-stranded telomeric sequences of the type (TG[1-3])n in vitro. Has a role in meiosis. The chain is Single-stranded TG1-3 DNA-binding protein (tcg1) from Schizosaccharomyces pombe (strain 972 / ATCC 24843) (Fission yeast).